We begin with the raw amino-acid sequence, 340 residues long: Replication factor C subunit 5 (340 aa).

M1 carries the N-acetylmethionine modification. 60–67 lines the ATP pocket; sequence GPPGTGKT.

This sequence belongs to the activator 1 small subunits family. In terms of assembly, subunit of the RFC complex, an heteropentameric complex consisting of a large subunit RFC1 and four small subunits RFC2, RFC3, RFC4 and RFC5; the RFC complex interacts with PCNA. Forms an heterotetrameric complex with RFC2, RFC3 and RFC4; this complex has ATPase activity but is not stimulated by PCNA. The heterotetramer of subunits RFC2, RFC3, RFC4 and RFC5 interacts with RAD17.

Its subcellular location is the nucleus. Its function is as follows. Subunit of the replication factor C (RFC) complex which acts during elongation of primed DNA templates by DNA polymerases delta and epsilon, and is necessary for ATP-dependent loading of proliferating cell nuclear antigen (PCNA) onto primed DNA. The sequence is that of Replication factor C subunit 5 (RFC5) from Homo sapiens (Human).